A 329-amino-acid polypeptide reads, in one-letter code: Ribonucleoside-diphosphate reductase subunit beta (329 aa).

Fe cation is bound by residues D66, E97, and H101. Residue Y105 is part of the active site. Fe cation contacts are provided by E164, E198, and H201.

This sequence belongs to the ribonucleoside diphosphate reductase small chain family. Tetramer of two alpha and two beta subunits. The cofactor is Fe cation.

The enzyme catalyses a 2'-deoxyribonucleoside 5'-diphosphate + [thioredoxin]-disulfide + H2O = a ribonucleoside 5'-diphosphate + [thioredoxin]-dithiol. In terms of biological role, provides the precursors necessary for DNA synthesis. Catalyzes the biosynthesis of deoxyribonucleotides from the corresponding ribonucleotides. The chain is Ribonucleoside-diphosphate reductase subunit beta (nrdF) from Bacillus subtilis (strain 168).